A 600-amino-acid polypeptide reads, in one-letter code: Gamma-terpinene synthase, chloroplastic (600 aa).

A chloroplast-targeting transit peptide spans 1–40 (MALNLLSSLPAACNFTRLSLPLSSKVNGFVPPITQVQYPM). Mg(2+) contacts are provided by Asp353, Asp357, Asp498, and Glu506. A DDXXD motif motif is present at residues 353 to 357 (DDVYD).

Belongs to the terpene synthase family. It depends on Mn(2+) as a cofactor. Mg(2+) is required as a cofactor.

It localises to the plastid. The protein resides in the chloroplast. It carries out the reaction (2E)-geranyl diphosphate = gamma-terpinene + diphosphate. Its pathway is secondary metabolite biosynthesis; terpenoid biosynthesis. Inhibited by 100 mM KCl. Its function is as follows. Monoterpene synthase which catalyzes the conversion of geranyl diphosphate to gamma-terpinene and the minor products limonene, alpha-pinene, beta-pinene, alpha-terpinolene, alpha-thujene, alpha-terpinene, myrcene and sabinene. The polypeptide is Gamma-terpinene synthase, chloroplastic (Citrus limon (Lemon)).